Consider the following 243-residue polypeptide: MTYSLRILDLPESDRPRERLIAQGAKYLTHAELLAILLGTGQGPGKLSAVGLGQHVLQHFSEHQQDPLTVLRDVNASELTTIQGIGPAKATTILAAIELGKRICQARPPELTVIDDPAVAAAALAGELMWQSQERFAVLLLDVKHRLLGTQVVSIGTATETLAHPRDIFREIIRKGATRAIVAHNHPSGQTDPSPEDLELTQQLLSGAQILGLPLLDHLILGNGDFTSLRQTTSLWNDCPQDL.

The MPN domain maps to 113–235; it reads VIDDPAVAAA…FTSLRQTTSL (123 aa). The Zn(2+) site is built by H184, H186, and D197. Residues 184–197 carry the JAMM motif motif; sequence HNHPSGQTDPSPED.

It belongs to the UPF0758 family.

The sequence is that of UPF0758 protein AM1_4368 from Acaryochloris marina (strain MBIC 11017).